The sequence spans 204 residues: Probable nicotinate-nucleotide adenylyltransferase (204 aa).

This sequence belongs to the NadD family.

It catalyses the reaction nicotinate beta-D-ribonucleotide + ATP + H(+) = deamido-NAD(+) + diphosphate. It functions in the pathway cofactor biosynthesis; NAD(+) biosynthesis; deamido-NAD(+) from nicotinate D-ribonucleotide: step 1/1. In terms of biological role, catalyzes the reversible adenylation of nicotinate mononucleotide (NaMN) to nicotinic acid adenine dinucleotide (NaAD). The chain is Probable nicotinate-nucleotide adenylyltransferase from Dehalococcoides mccartyi (strain CBDB1).